A 664-amino-acid polypeptide reads, in one-letter code: UvrABC system protein C (664 aa).

In terms of domain architecture, GIY-YIG spans 63-141 (LRPGVYRMYD…IKRYRPPYNI (79 aa)). Residues 254 to 289 (THVQKKLVTAMEQASNDLNYELAAVYRDRLKALAFI) enclose the UVR domain.

It belongs to the UvrC family. As to quaternary structure, interacts with UvrB in an incision complex.

The protein resides in the cytoplasm. Functionally, the UvrABC repair system catalyzes the recognition and processing of DNA lesions. UvrC both incises the 5' and 3' sides of the lesion. The N-terminal half is responsible for the 3' incision and the C-terminal half is responsible for the 5' incision. This is UvrABC system protein C from Zymomonas mobilis subsp. mobilis (strain ATCC 31821 / ZM4 / CP4).